A 347-amino-acid polypeptide reads, in one-letter code: Quinolinate synthase (347 aa).

Histidine 47 and serine 68 together coordinate iminosuccinate. Cysteine 113 contacts [4Fe-4S] cluster. Residues 139 to 141 (YAN) and serine 156 each bind iminosuccinate. Cysteine 200 is a binding site for [4Fe-4S] cluster. Iminosuccinate-binding positions include 226 to 228 (HPE) and threonine 243. Cysteine 297 is a binding site for [4Fe-4S] cluster.

The protein belongs to the quinolinate synthase family. Type 1 subfamily. [4Fe-4S] cluster serves as cofactor.

It localises to the cytoplasm. It catalyses the reaction iminosuccinate + dihydroxyacetone phosphate = quinolinate + phosphate + 2 H2O + H(+). It participates in cofactor biosynthesis; NAD(+) biosynthesis; quinolinate from iminoaspartate: step 1/1. In terms of biological role, catalyzes the condensation of iminoaspartate with dihydroxyacetone phosphate to form quinolinate. The sequence is that of Quinolinate synthase from Shigella boydii serotype 4 (strain Sb227).